The primary structure comprises 69 residues: MFVIRLADGEEVHGECDELTINPATGVLTVCRVDGFEETTTHYSPSAWRSVTHRKRGVGVRPSLVSTAQ.

This is an uncharacterized protein from Mycobacterium tuberculosis (strain ATCC 25618 / H37Rv).